The following is a 395-amino-acid chain: Acetate kinase (395 aa).

Residue Asn-8 participates in Mg(2+) binding. Lys-15 contributes to the ATP binding site. Arg-89 contributes to the substrate binding site. Catalysis depends on Asp-146, which acts as the Proton donor/acceptor. ATP is bound by residues 206–210 (HLGNG), 281–283 (DLR), and 329–333 (GIGEN). Glu-382 serves as a coordination point for Mg(2+).

The protein belongs to the acetokinase family. In terms of assembly, homodimer. Mg(2+) is required as a cofactor. The cofactor is Mn(2+).

It localises to the cytoplasm. The catalysed reaction is acetate + ATP = acetyl phosphate + ADP. It functions in the pathway metabolic intermediate biosynthesis; acetyl-CoA biosynthesis; acetyl-CoA from acetate: step 1/2. Catalyzes the formation of acetyl phosphate from acetate and ATP. Can also catalyze the reverse reaction. In Bacillus velezensis (strain DSM 23117 / BGSC 10A6 / LMG 26770 / FZB42) (Bacillus amyloliquefaciens subsp. plantarum), this protein is Acetate kinase.